Reading from the N-terminus, the 210-residue chain is Orotate phosphoribosyltransferase (210 aa).

Residues Arg94, Lys98, His100, and 120 to 128 (EDLISTGGS) each bind 5-phospho-alpha-D-ribose 1-diphosphate. Residue Ser124 participates in orotate binding.

This sequence belongs to the purine/pyrimidine phosphoribosyltransferase family. PyrE subfamily. Homodimer. It depends on Mg(2+) as a cofactor.

It carries out the reaction orotidine 5'-phosphate + diphosphate = orotate + 5-phospho-alpha-D-ribose 1-diphosphate. It participates in pyrimidine metabolism; UMP biosynthesis via de novo pathway; UMP from orotate: step 1/2. Catalyzes the transfer of a ribosyl phosphate group from 5-phosphoribose 1-diphosphate to orotate, leading to the formation of orotidine monophosphate (OMP). This Bacillus cereus (strain ATCC 10987 / NRS 248) protein is Orotate phosphoribosyltransferase.